The primary structure comprises 436 residues: GTPase Der (436 aa).

EngA-type G domains are found at residues 4 to 167 (PVVA…PKEE) and 176 to 351 (VKFS…DNHS). GTP-binding positions include 10-17 (GRPNVGKS), 57-61 (DTGGI), 119-122 (NKVD), 182-189 (GRPNVGKS), 229-233 (DTAGM), and 294-297 (NKWD). The 85-residue stretch at 352-436 (LRVQSSMLND…PIRVIARKRK (85 aa)) folds into the KH-like domain.

This sequence belongs to the TRAFAC class TrmE-Era-EngA-EngB-Septin-like GTPase superfamily. EngA (Der) GTPase family. Associates with the 50S ribosomal subunit.

GTPase that plays an essential role in the late steps of ribosome biogenesis. The chain is GTPase Der from Listeria welshimeri serovar 6b (strain ATCC 35897 / DSM 20650 / CCUG 15529 / CIP 8149 / NCTC 11857 / SLCC 5334 / V8).